We begin with the raw amino-acid sequence, 807 residues long: Glycerol-3-phosphate acyltransferase (807 aa).

Positions 308-313 (CHRSHM) match the HXXXXD motif motif.

This sequence belongs to the GPAT/DAPAT family.

It is found in the cell inner membrane. The catalysed reaction is sn-glycerol 3-phosphate + an acyl-CoA = a 1-acyl-sn-glycero-3-phosphate + CoA. Its pathway is phospholipid metabolism; CDP-diacylglycerol biosynthesis; CDP-diacylglycerol from sn-glycerol 3-phosphate: step 1/3. The sequence is that of Glycerol-3-phosphate acyltransferase from Shewanella putrefaciens (strain CN-32 / ATCC BAA-453).